Here is a 145-residue protein sequence, read N- to C-terminus: NADH-quinone oxidoreductase subunit A (145 aa).

The next 3 helical transmembrane spans lie at 14–34 (FAVF…GGFL), 66–86 (FYLV…LYAW), and 96–116 (VGFI…VYLV).

The protein belongs to the complex I subunit 3 family. NDH-1 is composed of 13 different subunits. Subunits NuoA, H, J, K, L, M, N constitute the membrane sector of the complex.

The protein localises to the cell inner membrane. It catalyses the reaction a quinone + NADH + 5 H(+)(in) = a quinol + NAD(+) + 4 H(+)(out). Its function is as follows. NDH-1 shuttles electrons from NADH, via FMN and iron-sulfur (Fe-S) centers, to quinones in the respiratory chain. The immediate electron acceptor for the enzyme in this species is believed to be ubiquinone. Couples the redox reaction to proton translocation (for every two electrons transferred, four hydrogen ions are translocated across the cytoplasmic membrane), and thus conserves the redox energy in a proton gradient. The protein is NADH-quinone oxidoreductase subunit A of Sodalis glossinidius (strain morsitans).